We begin with the raw amino-acid sequence, 68 residues long: Large ribosomal subunit protein bL35 (68 aa).

It belongs to the bacterial ribosomal protein bL35 family.

The sequence is that of Large ribosomal subunit protein bL35 from Persephonella marina (strain DSM 14350 / EX-H1).